The sequence spans 590 residues: tRNA-guanine(15) transglycosylase (590 aa).

Catalysis depends on aspartate 90, which acts as the Nucleophile. Residue aspartate 125 coordinates substrate. Residues cysteine 278, cysteine 280, and cysteine 283 each contribute to the Zn(2+) site. The PUA domain maps to 502–577 (KGRVVVKGLF…HPFIIIRRHV (76 aa)).

Belongs to the archaeosine tRNA-ribosyltransferase family. Zn(2+) is required as a cofactor.

The enzyme catalyses guanosine(15) in tRNA + 7-cyano-7-deazaguanine = 7-cyano-7-carbaguanosine(15) in tRNA + guanine. It functions in the pathway tRNA modification; archaeosine-tRNA biosynthesis. Exchanges the guanine residue with 7-cyano-7-deazaguanine (preQ0) at position 15 in the dihydrouridine loop (D-loop) of archaeal tRNAs. The chain is tRNA-guanine(15) transglycosylase from Korarchaeum cryptofilum (strain OPF8).